Reading from the N-terminus, the 203-residue chain is dCTP deaminase (203 aa).

DCTP is bound by residues 105–110 (RSSLGR), D123, 131–133 (TLE), Q152, Y166, K173, and Q177. The Proton donor/acceptor role is filled by E133. The disordered stretch occupies residues 164-203 (RPYGVERGSKYQDQDGPQASRIGSDPEFHSDENQAAEHES). The segment covering 166–176 (YGVERGSKYQD) has biased composition (basic and acidic residues). Over residues 187 to 203 (SDPEFHSDENQAAEHES) the composition is skewed to basic and acidic residues.

Belongs to the dCTP deaminase family. In terms of assembly, homotrimer.

The catalysed reaction is dCTP + H2O + H(+) = dUTP + NH4(+). The protein operates within pyrimidine metabolism; dUMP biosynthesis; dUMP from dCTP (dUTP route): step 1/2. Functionally, catalyzes the deamination of dCTP to dUTP. The polypeptide is dCTP deaminase (Halorubrum lacusprofundi (strain ATCC 49239 / DSM 5036 / JCM 8891 / ACAM 34)).